We begin with the raw amino-acid sequence, 156 residues long: Small ribosomal subunit protein uS7c (156 aa).

It belongs to the universal ribosomal protein uS7 family. Part of the 30S ribosomal subunit.

It localises to the plastid. The protein resides in the chloroplast. Its function is as follows. One of the primary rRNA binding proteins, it binds directly to 16S rRNA where it nucleates assembly of the head domain of the 30S subunit. This chain is Small ribosomal subunit protein uS7c (rps7), found in Nephroselmis olivacea (Green alga).